The following is a 405-amino-acid chain: Protein lin-11 (405 aa).

Glycyl lysine isopeptide (Lys-Gly) (interchain with G-Cter in SUMO) cross-links involve residues Lys-17 and Lys-18. LIM zinc-binding domains are found at residues 68-124 (CAAC…RRYS) and 127-187 (CAGC…TATK). Polar residues predominate over residues 189 to 205 (STPTSIHRPVSNGSECN). 2 disordered regions span residues 189–208 (STPT…NSDV) and 224–246 (GEGD…GPRT). A DNA-binding region (homeobox) is located at residues 241–300 (RRGPRTTIKAKQLETLKNAFAATPKPTRHIREQLAAETGLNMRVIQVWFQNRRSKERRMK).

Expressed in ADL, AVJL, AIZL, RICL, RIF and AVG neurons.

It is found in the nucleus. Probable transcription factor which is required for asymmetric division of vulval blast cells. Involved in olfactory plasticity probably by regulating the expression of transcription factor mbr-1 in RIF neurons. Plays a role in the chemorepulsive response toward ascaroside pheromones mediated by the ADL sensory neurons, probably by regulating E-box motif 5'-CANNTG-3' containing target genes in the ADL neurons. Plays a role in the differentiation of the ADL sensory neurons. The protein is Protein lin-11 (lin-11) of Caenorhabditis elegans.